The sequence spans 125 residues: Small ribosomal subunit protein uS13 (125 aa).

The interval 92 to 125 (RRSLPVRGQRTQTNARTRKGKRKTVAGKKKATKK) is disordered. A compositionally biased stretch (basic residues) spans 107–125 (RTRKGKRKTVAGKKKATKK).

The protein belongs to the universal ribosomal protein uS13 family. As to quaternary structure, part of the 30S ribosomal subunit. Forms a loose heterodimer with protein S19. Forms two bridges to the 50S subunit in the 70S ribosome.

In terms of biological role, located at the top of the head of the 30S subunit, it contacts several helices of the 16S rRNA. In the 70S ribosome it contacts the 23S rRNA (bridge B1a) and protein L5 of the 50S subunit (bridge B1b), connecting the 2 subunits; these bridges are implicated in subunit movement. Contacts the tRNAs in the A and P-sites. This is Small ribosomal subunit protein uS13 from Chlorobium phaeobacteroides (strain DSM 266 / SMG 266 / 2430).